The primary structure comprises 652 residues: RNA-binding E3 ubiquitin-protein ligase MEX3C (652 aa).

Disordered regions lie at residues 15–39 (AAPAPLPQPPPLPPPPPAGGPELEG) and 80–136 (QARR…EDRP). A compositionally biased stretch (pro residues) spans 18–33 (APLPQPPPLPPPPPAG). A compositionally biased stretch (acidic residues) spans 101–134 (AELELEVDEEEGEEAELDGELLEEEELEEAEEED). KH domains lie at 225-286 (TTEC…KREI) and 319-380 (QTTV…REEI). Disordered stretches follow at residues 429–448 (ARMMSNYRNDSSSSLGSGST) and 506–566 (FEPV…HVGL). Residues 430–448 (RMMSNYRNDSSSSLGSGST) show a composition bias toward low complexity. A compositionally biased stretch (polar residues) spans 519-537 (PSGNMKTQRRGSQPSTPRL). Residues Ser530 and Ser538 each carry the phosphoserine modification. Basic and acidic residues predominate over residues 544–555 (SIEHPLARRVRS). The segment at 601–641 (CVICFENEVIAALVPCGHNLFCMECANKICEKRTPSCPVCQ) adopts an RING-type zinc-finger fold.

In terms of assembly, interacts with USP7, which antagonizes the ability to degrade mRNA. Post-translationally, phosphorylated.

It localises to the nucleus. The protein resides in the cytoplasm. The catalysed reaction is S-ubiquitinyl-[E2 ubiquitin-conjugating enzyme]-L-cysteine + [acceptor protein]-L-lysine = [E2 ubiquitin-conjugating enzyme]-L-cysteine + N(6)-ubiquitinyl-[acceptor protein]-L-lysine.. In terms of biological role, RNA-binding protein. May be involved in post-transcriptional regulatory mechanisms, modulating levels of some mRNAs by promoting their degradation in a way involving ubiquitin ligase activity. May act as suppressor of replication stress and chromosome missegregation. This chain is RNA-binding E3 ubiquitin-protein ligase MEX3C (Mex3c), found in Mus musculus (Mouse).